An 801-amino-acid polypeptide reads, in one-letter code: MGDTAVEPAPLKPASEPAPGPPGNNGGSLLSVITEGVGELSVIDPEVAQKACQEVLEKVRLLHGAVAVSKRGTALELVNGDGVDTEIRCLDDPPAQIREEEDEMGATVTSGTAKGARRRRQNNSAKQSWLLRLFESKLFDISMAISYLYNSKEPGVQAYIGNRLFCFRNEDVDFYLPQLLNMYIHMDEDVGDAIKPYIVHRCRQSINFSLQCALLLGAYSSDMHISTQRHSRGTKLRKLILSDELKPAHRKRELPSLSPALNTGLSPSKRTHQRSKSDATASISLSSSLKRTASNPKVENEDEPIRLAPEREFIKSLMAIGKRLATLPTKEQKTQRLISELSLLNHKLPARVWLPTAAFDHHVVRVPHTQAVVLNSKDKAPYLIYVEVLECENFDTTNVPARIPENRIRSTRSVENLPECGITHEQRAGSFSTVPNYDNDDEAWSVDDIGELQVELPEMHTNSCDNISQFSVDSITSQESKEPVFIAAGDIRRRLSEQLAHTPTAFRRDPEDPSAVALKEPWQEKVRRIREGSPYGHLPNWRLLSVIVKCGDDLRQELLAFQVLKQLQSIWEQERVPLWIKPYKILVISADSGMIEPVVNAVSIHQVKKQSQLSLLDYFLQEHGSYTTEAFLSAQRNFVQSCAGYCLVCYLLQVKDRHNGNILLDAEGHIIHIDFGFILSSSPRNLGFETSAFKLTTEFVDVMGGLDGDMFNYYKMLMLQGLIAARKHMDKVVQIVEIMQQGSQLPCFHGSSTIRNLKERFHMNMTEEQLQLLVEQMVDGSMRSITTKLYDGFQYLTNGIM.

Disordered regions lie at residues 1-29, 101-121, and 250-304; these read MGDTAVEPAPLKPASEPAPGPPGNNGGSL, EDEMGATVTSGTAKGARRRRQ, and RKRE…EDEP. An N-acetylglycine modification is found at Gly-2. The interaction with ACBD3 stretch occupies residues 2–68; sequence GDTAVEPAPL…VRLLHGAVAV (67 aa). The region spanning 29 to 242 is the PIK helical domain; that stretch reads LLSVITEGVG…GTKLRKLILS (214 aa). The residue at position 258 (Ser-258) is a Phosphoserine. Positions 259–268 are enriched in polar residues; it reads PALNTGLSPS. Phosphothreonine is present on Thr-263. 6 positions are modified to phosphoserine: Ser-266, Ser-275, Ser-277, Ser-284, Ser-294, and Ser-413. Residues 278–294 show a composition bias toward low complexity; that stretch reads DATASISLSSSLKRTAS. Thr-423 carries the phosphothreonine modification. At Ser-496 the chain carries Phosphoserine. Thr-502 and Thr-504 each carry phosphothreonine. The region spanning 520–786 is the PI3K/PI4K catalytic domain; the sequence is EPWQEKVRRI…MVDGSMRSIT (267 aa). The interval 526–532 is G-loop; it reads VRRIREG. The segment at 653–661 is catalytic loop; sequence QVKDRHNGN. The tract at residues 672 to 696 is activation loop; the sequence is HIDFGFILSSSPRNLGFETSAFKLT.

The protein belongs to the PI3/PI4-kinase family. Type III PI4K subfamily. As to quaternary structure, interacts with ARF1 and ARF3 in the Golgi complex, but not with ARF4, ARF5 or ARF6. Interacts with NCS1/FREQ in a calcium-independent manner. Interacts with CALN1/CABP8 and CALN2/CABP7; in a calcium-dependent manner; this interaction competes with NCS1/FREQ binding. Interacts with ACBD3. Interacts with ARMH3, YWHAB, YWHAE, YWHAG, YWHAH, YWHAQ, YWHAZ and SFN. Interacts with GGA2 (via VHS domain); the interaction is important for PI4KB location at the Golgi apparatus membrane. Interacts with ATG9A. Mg(2+) serves as cofactor. Mn(2+) is required as a cofactor.

Its subcellular location is the endomembrane system. It localises to the mitochondrion outer membrane. The protein resides in the rough endoplasmic reticulum membrane. The protein localises to the golgi apparatus. It is found in the golgi apparatus membrane. The enzyme catalyses a 1,2-diacyl-sn-glycero-3-phospho-(1D-myo-inositol) + ATP = a 1,2-diacyl-sn-glycero-3-phospho-(1D-myo-inositol 4-phosphate) + ADP + H(+). Inhibited by wortmannin. Increased kinase activity upon interaction with NCS1/FREQ. Its function is as follows. Phosphorylates phosphatidylinositol (PI) in the first committed step in the production of the second messenger inositol-1,4,5,-trisphosphate (PIP). May regulate Golgi disintegration/reorganization during mitosis, possibly via its phosphorylation. Involved in Golgi-to-plasma membrane trafficking. May play an important role in the inner ear development. The protein is Phosphatidylinositol 4-kinase beta (PI4KB) of Sorex araneus (Eurasian common shrew).